Reading from the N-terminus, the 419-residue chain is Serine--tRNA ligase (419 aa).

Residue 225–227 (TAE) participates in L-serine binding. 256–258 (RKE) contributes to the ATP binding site. Glu279 contributes to the L-serine binding site. An ATP-binding site is contributed by 343-346 (EISS). Ser378 is an L-serine binding site.

This sequence belongs to the class-II aminoacyl-tRNA synthetase family. Type-1 seryl-tRNA synthetase subfamily. Homodimer. The tRNA molecule binds across the dimer.

It localises to the cytoplasm. It catalyses the reaction tRNA(Ser) + L-serine + ATP = L-seryl-tRNA(Ser) + AMP + diphosphate + H(+). It carries out the reaction tRNA(Sec) + L-serine + ATP = L-seryl-tRNA(Sec) + AMP + diphosphate + H(+). It participates in aminoacyl-tRNA biosynthesis; selenocysteinyl-tRNA(Sec) biosynthesis; L-seryl-tRNA(Sec) from L-serine and tRNA(Sec): step 1/1. In terms of biological role, catalyzes the attachment of serine to tRNA(Ser). Is also able to aminoacylate tRNA(Sec) with serine, to form the misacylated tRNA L-seryl-tRNA(Sec), which will be further converted into selenocysteinyl-tRNA(Sec). The protein is Serine--tRNA ligase of Pelagibacter ubique (strain HTCC1062).